The following is a 107-amino-acid chain: Metallothionein-1 (107 aa).

A propeptide spanning residues M1–D2 is cleaved from the precursor.

This sequence belongs to the metallothionein superfamily. Type 7 family.

In terms of biological role, the metallothioneins are involved in the cellular sequestration of toxic metal ions. Binds 12 cadmium ions per molecule. This chain is Metallothionein-1, found in Tetrahymena pigmentosa.